The chain runs to 151 residues: tRNA-specific adenosine deaminase (151 aa).

Residues 4 to 122 (NRDSYWMKIA…PFLKKIFINL (119 aa)) form the CMP/dCMP-type deaminase domain. Zn(2+) is bound at residue His55. Glu57 functions as the Proton donor in the catalytic mechanism. Positions 85 and 88 each coordinate Zn(2+).

The protein belongs to the cytidine and deoxycytidylate deaminase family. As to quaternary structure, homodimer. Requires Zn(2+) as cofactor.

It catalyses the reaction adenosine(34) in tRNA + H2O + H(+) = inosine(34) in tRNA + NH4(+). Catalyzes the deamination of adenosine to inosine at the wobble position 34 of tRNA(Arg2). The polypeptide is tRNA-specific adenosine deaminase (Buchnera aphidicola subsp. Schizaphis graminum (strain Sg)).